Consider the following 283-residue polypeptide: Phospholipase C (283 aa).

The signal sequence occupies residues 1 to 24; sequence MKKKVLALGAAITLVAPLQSVAFA. Residues 25 to 38 constitute a propeptide that is removed on maturation; that stretch reads HENDGGQRFGVIPR. Residues Trp-39, His-52, Asp-93, His-107, His-156, Asp-160, His-166, His-180, and Glu-184 each coordinate Zn(2+). Residues 39 to 283 form the Zn-dependent PLC domain; it reads WSAEDKHKEG…QLWFDTYGNR (245 aa).

This sequence belongs to the bacterial zinc-metallophospholipase C family. In terms of assembly, monomer. Requires Zn(2+) as cofactor.

The enzyme catalyses a 1,2-diacyl-sn-glycero-3-phosphocholine + H2O = phosphocholine + a 1,2-diacyl-sn-glycerol + H(+). Functionally, required, with sphingomyelinase, to effect target cell lysis (hemolysis). This chain is Phospholipase C (cerA), found in Bacillus cereus.